The following is a 420-amino-acid chain: Carboxypeptidase A4 (420 aa).

The first 16 residues, 1–16 (MKWLLFFGALIGAGIC), serve as a signal peptide directing secretion. Positions 17 to 113 (GRDKFFGDQV…EMQHNEGIER (97 aa)) are cleaved as a propeptide — activation peptide. 7 residues coordinate a protein: P69, V71, N118, Y122, H123, E126, and F162. The 295-residue stretch at 121–415 (AYHPLEAIYH…LGLKTIMEHV (295 aa)) folds into the Peptidase M14 domain. Zn(2+)-binding residues include H180 and E183. C249 and C272 are oxidised to a cystine. Residue N259 is glycosylated (N-linked (GlcNAc...) asparagine). H307 serves as a coordination point for Zn(2+). The Proton donor/acceptor role is filled by E381.

The protein belongs to the peptidase M14 family. As to quaternary structure, interacts with LXN. Requires Zn(2+) as cofactor.

It is found in the secreted. Metalloprotease that cleaves hydrophobic C-terminal residues with a preference for -Phe, -Leu, -Ile, -Met, -Tyr and -Val. May function in peptide hormone and/or neuropeptide catabolism. This is Carboxypeptidase A4 (Cpa4) from Mus musculus (Mouse).